A 115-amino-acid chain; its full sequence is Vitelline membrane protein Vm32E (115 aa).

The first 17 residues, 1-17, serve as a signal peptide directing secretion; it reads MKIVAFTLVAFVALAGA. The VM domain maps to 35 to 72; sequence GYPAPPCPTNYLFSCQPNLAPAPCAQEAPAYGSAGAYT.

Belongs to the vitelline membrane family.

The protein localises to the secreted. Major early eggshell protein. This chain is Vitelline membrane protein Vm32E, found in Drosophila yakuba (Fruit fly).